The sequence spans 280 residues: Pyridoxal 5'-phosphate synthase subunit PdxS (280 aa).

D12 contacts D-ribose 5-phosphate. The Schiff-base intermediate with D-ribose 5-phosphate role is filled by K69. G141 is a binding site for D-ribose 5-phosphate. R153 is a D-glyceraldehyde 3-phosphate binding site. Residues G202 and G223–S224 contribute to the D-ribose 5-phosphate site.

It belongs to the PdxS/SNZ family. In the presence of PdxT, forms a dodecamer of heterodimers.

The enzyme catalyses aldehydo-D-ribose 5-phosphate + D-glyceraldehyde 3-phosphate + L-glutamine = pyridoxal 5'-phosphate + L-glutamate + phosphate + 3 H2O + H(+). The protein operates within cofactor biosynthesis; pyridoxal 5'-phosphate biosynthesis. Catalyzes the formation of pyridoxal 5'-phosphate from ribose 5-phosphate (RBP), glyceraldehyde 3-phosphate (G3P) and ammonia. The ammonia is provided by the PdxT subunit. Can also use ribulose 5-phosphate and dihydroxyacetone phosphate as substrates, resulting from enzyme-catalyzed isomerization of RBP and G3P, respectively. This Fusobacterium nucleatum subsp. nucleatum (strain ATCC 25586 / DSM 15643 / BCRC 10681 / CIP 101130 / JCM 8532 / KCTC 2640 / LMG 13131 / VPI 4355) protein is Pyridoxal 5'-phosphate synthase subunit PdxS.